A 42-amino-acid polypeptide reads, in one-letter code: Photosystem II reaction center protein J (42 aa).

The helical transmembrane segment at 10 to 30 threads the bilayer; it reads IPLWLIATVAGILVLTVVGIF.

The protein belongs to the PsbJ family. In terms of assembly, PSII is composed of 1 copy each of membrane proteins PsbA, PsbB, PsbC, PsbD, PsbE, PsbF, PsbH, PsbI, PsbJ, PsbK, PsbL, PsbM, PsbT, PsbX, PsbY, PsbZ, Psb30/Ycf12, at least 3 peripheral proteins of the oxygen-evolving complex and a large number of cofactors. It forms dimeric complexes.

It is found in the plastid. The protein localises to the chloroplast thylakoid membrane. One of the components of the core complex of photosystem II (PSII). PSII is a light-driven water:plastoquinone oxidoreductase that uses light energy to abstract electrons from H(2)O, generating O(2) and a proton gradient subsequently used for ATP formation. It consists of a core antenna complex that captures photons, and an electron transfer chain that converts photonic excitation into a charge separation. The polypeptide is Photosystem II reaction center protein J (Chara vulgaris (Common stonewort)).